We begin with the raw amino-acid sequence, 249 residues long: CDP-diacylglycerol pyrophosphatase (249 aa).

Residues 7–27 (FLLAVVIVAAVAGIGYWKLAA) form a helical membrane-spanning segment.

This sequence belongs to the Cdh family.

It localises to the cell inner membrane. It catalyses the reaction a CDP-1,2-diacyl-sn-glycerol + H2O = a 1,2-diacyl-sn-glycero-3-phosphate + CMP + 2 H(+). It participates in phospholipid metabolism; CDP-diacylglycerol degradation; phosphatidate from CDP-diacylglycerol: step 1/1. The protein is CDP-diacylglycerol pyrophosphatase of Citrobacter koseri (strain ATCC BAA-895 / CDC 4225-83 / SGSC4696).